Here is a 239-residue protein sequence, read N- to C-terminus: ATP-dependent dethiobiotin synthetase BioD (239 aa).

Position 15 to 20 (15 to 20 (EIGKTF)) interacts with ATP. T19 lines the Mg(2+) pocket. K40 is an active-site residue. ATP contacts are provided by residues D57, 118–121 (EGAG), and 178–179 (NH). Residues D57 and E118 each coordinate Mg(2+).

The protein belongs to the dethiobiotin synthetase family. As to quaternary structure, homodimer. The cofactor is Mg(2+).

It is found in the cytoplasm. It catalyses the reaction (7R,8S)-7,8-diammoniononanoate + CO2 + ATP = (4R,5S)-dethiobiotin + ADP + phosphate + 3 H(+). The protein operates within cofactor biosynthesis; biotin biosynthesis; biotin from 7,8-diaminononanoate: step 1/2. Functionally, catalyzes a mechanistically unusual reaction, the ATP-dependent insertion of CO2 between the N7 and N8 nitrogen atoms of 7,8-diaminopelargonic acid (DAPA, also called 7,8-diammoniononanoate) to form a ureido ring. This Burkholderia lata (strain ATCC 17760 / DSM 23089 / LMG 22485 / NCIMB 9086 / R18194 / 383) protein is ATP-dependent dethiobiotin synthetase BioD.